The sequence spans 49 residues: uncharacterized protein (49 aa).

The interval Met-1–Ile-49 is disordered. Residues Asn-9–Glu-18 are compositionally biased toward basic and acidic residues.

This is an uncharacterized protein from Dictyostelium discoideum (Social amoeba).